Consider the following 264-residue polypeptide: uncharacterized protein (264 aa).

The region spanning 3-243 (LQLDNVSLKR…QILSAFFDTP (241 aa)) is the ABC transporter domain. 35-42 (GLNGAGKT) lines the ATP pocket.

This sequence belongs to the ABC transporter superfamily.

This is an uncharacterized protein from Bacillus subtilis (strain 168).